The primary structure comprises 200 residues: MASSLTCTGVIWALLSFLSAATSCVGFFMPYWLWGSQLGKPVSFGTFRRCSYPVHDESRQMMVMVEECGRYASFQGIPSTEWRICTIVTGLGCGLLLLVALTALMGCCVSELISRTVGRVAGGIQFLGGLLIGAGCALYPLGWDSEEVRQTCGYISDQFDLGKCEIGWAYYCTGAGAAAAMLLCTWLACFSGKKQKHYPY.

The first 23 residues, 1 to 23 (MASSLTCTGVIWALLSFLSAATS), serve as a signal peptide directing secretion. A run of 3 helical transmembrane segments spans residues 84 to 104 (ICTI…LTAL), 123 to 143 (GIQF…PLGW), and 166 to 186 (IGWA…LCTW).

It belongs to the LHFP family.

The protein resides in the membrane. The polypeptide is LHFPL tetraspan subfamily member 6 protein (Rattus norvegicus (Rat)).